The following is a 303-amino-acid chain: Probable cell division protein WhiA (303 aa).

Residues 272-303 (SIQQVADALEFPITKSGVNHRLRKINKIADDL) constitute a DNA-binding region (H-T-H motif).

The protein belongs to the WhiA family.

In terms of biological role, involved in cell division and chromosome segregation. The chain is Probable cell division protein WhiA from Streptococcus pyogenes serotype M1.